The chain runs to 390 residues: Calcium-binding and spermatid-specific protein 1 (390 aa).

Disordered regions lie at residues 1–23 (MAED…TPTE), 82–109 (ASLK…KESI), and 146–225 (TIDA…TIPD). Over residues 162–174 (ETQEDSSANDEDT) the composition is skewed to acidic residues. Residues 184–193 (TDVSSSTSSD) show a composition bias toward low complexity. Phosphoserine is present on residues serine 251 and serine 267. Threonine 280 is modified (phosphothreonine; by CK2). Position 312 is a phosphoserine (serine 312). Residues 330–344 (EPHVDTKNSPEKDAA) show a composition bias toward basic and acidic residues. Residues 330–390 (EPHVDTKNSP…LKEEPDELMM (61 aa)) form a disordered region. Residues serine 346, serine 356, serine 371, and serine 375 each carry the phosphoserine modification. Polar residues predominate over residues 346–364 (SVTNVTEEFPSVTSVVEQS).

As to expression, expressed in seminiferous tubules of the testis in step 10 spermatids (stage X), subsequently increasing to reach maximal levels of step 18 elongated spermatids (stage VI) (at protein level). Strongly expressed in testis. Weakly expressed in olfactory epithelium. Expressed in spermatids of seminiferous tubules at steps 4-14 (stages IV to XIV of the seminiferous epithelium classification).

It is found in the cytoplasm. The protein resides in the mitochondrion inner membrane. The protein localises to the cell projection. It localises to the cilium. Its subcellular location is the flagellum. It is found in the cytoplasmic vesicle. The protein resides in the secretory vesicle. The protein localises to the acrosome. Calcium-binding protein. Essential for maintaining the structural integrity of the sperm flagella. The chain is Calcium-binding and spermatid-specific protein 1 (Cabs1) from Rattus norvegicus (Rat).